We begin with the raw amino-acid sequence, 480 residues long: Phosphomethylpyrimidine synthase (480 aa).

Substrate-binding positions include N66, M95, Y124, H159, 179–181, 220–223, and E259; these read SRG and DGLR. H263 serves as a coordination point for Zn(2+). Y286 contacts substrate. H327 lines the Zn(2+) pocket. [4Fe-4S] cluster contacts are provided by C407, C410, and C415. Residues 426–480 form a disordered region; the sequence is DGDMESIEADADDRTPLEDSSAAAVNRPPVGTHDGADIPGPDADMPADTEGSADD. Positions 470–480 are enriched in acidic residues; that stretch reads MPADTEGSADD.

It belongs to the ThiC family. It depends on [4Fe-4S] cluster as a cofactor.

It carries out the reaction 5-amino-1-(5-phospho-beta-D-ribosyl)imidazole + S-adenosyl-L-methionine = 4-amino-2-methyl-5-(phosphooxymethyl)pyrimidine + CO + 5'-deoxyadenosine + formate + L-methionine + 3 H(+). It participates in cofactor biosynthesis; thiamine diphosphate biosynthesis. Catalyzes the synthesis of the hydroxymethylpyrimidine phosphate (HMP-P) moiety of thiamine from aminoimidazole ribotide (AIR) in a radical S-adenosyl-L-methionine (SAM)-dependent reaction. The sequence is that of Phosphomethylpyrimidine synthase from Haloarcula marismortui (strain ATCC 43049 / DSM 3752 / JCM 8966 / VKM B-1809) (Halobacterium marismortui).